Here is a 666-residue protein sequence, read N- to C-terminus: uncharacterized protein (666 aa).

The RNB domain maps to 263–553; that stretch reads RFDLTTLKTY…THFQMKAYLR (291 aa).

This sequence belongs to the RNR ribonuclease family.

This is an uncharacterized protein from Synechocystis sp. (strain ATCC 27184 / PCC 6803 / Kazusa).